The sequence spans 293 residues: Ribosomal protein L11 methyltransferase (293 aa).

The S-adenosyl-L-methionine site is built by Thr145, Gly166, Asp188, and Asn230.

Belongs to the methyltransferase superfamily. PrmA family.

The protein localises to the cytoplasm. It catalyses the reaction L-lysyl-[protein] + 3 S-adenosyl-L-methionine = N(6),N(6),N(6)-trimethyl-L-lysyl-[protein] + 3 S-adenosyl-L-homocysteine + 3 H(+). Functionally, methylates ribosomal protein L11. This is Ribosomal protein L11 methyltransferase from Shewanella sp. (strain ANA-3).